The primary structure comprises 517 residues: Methionine aminopeptidase 1b (517 aa).

A disordered region spans residues 74 to 94 (YCNKENSNNNNNNNNNNNNNL). Low complexity predominate over residues 79–94 (NSNNNNNNNNNNNNNL). Residues 114–166 (ENLCSGCKKVLIKKLSCPICLKNKIFSYFCNQECFKGSWKEHQKIHENMNKEN) form a C6H2-type zinc finger. Zn(2+)-binding residues include Cys-117, Cys-120, Cys-130, Cys-133, Cys-143, Cys-147, His-155, and His-159. Residue His-325 coordinates a protein. Positions 342, 353, and 419 each coordinate Zn(2+). His-426 contributes to the a protein binding site. Glu-452 and Glu-483 together coordinate Zn(2+).

This sequence belongs to the peptidase M24A family. Methionine aminopeptidase type 1 subfamily. In terms of assembly, associates with the 60S ribosomal subunit of the 80S translational complex. Zn(2+) serves as cofactor. Co(2+) is required as a cofactor. It depends on Mn(2+) as a cofactor. Requires Fe(2+) as cofactor.

Its subcellular location is the cytoplasm. The enzyme catalyses Release of N-terminal amino acids, preferentially methionine, from peptides and arylamides.. With respect to regulation, inhibited by pyrimidine derivative XC11. In terms of biological role, cotranslationally removes the N-terminal methionine from nascent proteins. The N-terminal methionine is often cleaved when the second residue in the primary sequence is small and uncharged (Met-Ala-, Cys, Gly, Pro, Ser, Thr, or Val). May play an important role in parasite growth during the blood asexual stage. The protein is Methionine aminopeptidase 1b of Plasmodium falciparum (isolate 3D7).